The following is a 689-amino-acid chain: Glycine--tRNA ligase beta subunit (689 aa).

This sequence belongs to the class-II aminoacyl-tRNA synthetase family. As to quaternary structure, tetramer of two alpha and two beta subunits.

It is found in the cytoplasm. The enzyme catalyses tRNA(Gly) + glycine + ATP = glycyl-tRNA(Gly) + AMP + diphosphate. In Shigella flexneri serotype 5b (strain 8401), this protein is Glycine--tRNA ligase beta subunit.